We begin with the raw amino-acid sequence, 480 residues long: Proline--tRNA ligase (480 aa).

Belongs to the class-II aminoacyl-tRNA synthetase family. ProS type 3 subfamily. As to quaternary structure, homodimer.

It localises to the cytoplasm. It catalyses the reaction tRNA(Pro) + L-proline + ATP = L-prolyl-tRNA(Pro) + AMP + diphosphate. In terms of biological role, catalyzes the attachment of proline to tRNA(Pro) in a two-step reaction: proline is first activated by ATP to form Pro-AMP and then transferred to the acceptor end of tRNA(Pro). The protein is Proline--tRNA ligase of Pyrococcus abyssi (strain GE5 / Orsay).